The sequence spans 407 residues: Argininosuccinate synthase (407 aa).

ATP is bound by residues 13–21 and alanine 40; that span reads AYSGGLDTS. Positions 91 and 96 each coordinate L-citrulline. Position 121 (glycine 121) interacts with ATP. The L-aspartate site is built by threonine 123, asparagine 127, and aspartate 128. Asparagine 127 is an L-citrulline binding site. Positions 131, 182, 191, 267, and 279 each coordinate L-citrulline.

It belongs to the argininosuccinate synthase family. Type 1 subfamily. As to quaternary structure, homotetramer.

It is found in the cytoplasm. The catalysed reaction is L-citrulline + L-aspartate + ATP = 2-(N(omega)-L-arginino)succinate + AMP + diphosphate + H(+). It participates in amino-acid biosynthesis; L-arginine biosynthesis; L-arginine from L-ornithine and carbamoyl phosphate: step 2/3. The polypeptide is Argininosuccinate synthase (Agrobacterium fabrum (strain C58 / ATCC 33970) (Agrobacterium tumefaciens (strain C58))).